The chain runs to 358 residues: uncharacterized protein (358 aa).

Zn(2+) contacts are provided by C39, H61, C92, C95, C98, C106, and D157.

This sequence belongs to the zinc-containing alcohol dehydrogenase family. It depends on Zn(2+) as a cofactor.

This is an uncharacterized protein from Escherichia coli (strain K12).